We begin with the raw amino-acid sequence, 128 residues long: 2-iminobutanoate/2-iminopropanoate deaminase (128 aa).

Belongs to the RutC family.

It is found in the cytoplasm. The catalysed reaction is 2-iminobutanoate + H2O = 2-oxobutanoate + NH4(+). The enzyme catalyses 2-iminopropanoate + H2O = pyruvate + NH4(+). Catalyzes the hydrolytic deamination of enamine/imine intermediates that form during the course of normal metabolism. May facilitate the release of ammonia from these potentially toxic reactive metabolites, reducing their impact on cellular components. It may act on enamine/imine intermediates formed by several types of pyridoxal-5'-phosphate-dependent dehydratases including L-threonine dehydratase. Preferentially digests Leu and Met in cooperation with L-amino acid oxidase, but digests Phe poorly. This chain is 2-iminobutanoate/2-iminopropanoate deaminase, found in Dermatophagoides farinae (American house dust mite).